Consider the following 328-residue polypeptide: Biotin synthase (328 aa).

The Radical SAM core domain occupies 50 to 277 (FGDQVHLCCI…GKEIVICGGR (228 aa)). Positions 67, 71, and 74 each coordinate [4Fe-4S] cluster. Ser111, Cys142, and Cys202 together coordinate [2Fe-2S] cluster.

This sequence belongs to the radical SAM superfamily. Biotin synthase family. As to quaternary structure, homodimer. [4Fe-4S] cluster serves as cofactor. It depends on [2Fe-2S] cluster as a cofactor.

The catalysed reaction is (4R,5S)-dethiobiotin + (sulfur carrier)-SH + 2 reduced [2Fe-2S]-[ferredoxin] + 2 S-adenosyl-L-methionine = (sulfur carrier)-H + biotin + 2 5'-deoxyadenosine + 2 L-methionine + 2 oxidized [2Fe-2S]-[ferredoxin]. It participates in cofactor biosynthesis; biotin biosynthesis; biotin from 7,8-diaminononanoate: step 2/2. Its function is as follows. Catalyzes the conversion of dethiobiotin (DTB) to biotin by the insertion of a sulfur atom into dethiobiotin via a radical-based mechanism. In Desulfatibacillum aliphaticivorans, this protein is Biotin synthase.